We begin with the raw amino-acid sequence, 369 residues long: Transcription initiation factor IIA large subunit (369 aa).

Polar residues-rich tracts occupy residues 113 to 210 and 218 to 233; these read HGNS…QNSP and TESS…NDVP. The interval 113 to 248 is disordered; that stretch reads HGNSNYYSPP…IHDLDDAGSP (136 aa). Ser-249 bears the Phosphoserine mark. The tract at residues 282–319 is disordered; sequence IEDNEDEKKPPVDTPSDEAINSDLDDPDSDEAPETEEG. Residues 304–319 are compositionally biased toward acidic residues; it reads DLDDPDSDEAPETEEG.

Belongs to the TFIIA subunit 1 family. In terms of assembly, TFIIA is a heterodimer of the large subunit and the small subunit gamma.

It localises to the nucleus. TFIIA is a component of the transcription machinery of RNA polymerase II and plays an important role in transcriptional activation. TFIIA in a complex with tbp mediates transcriptional activity. This is Transcription initiation factor IIA large subunit from Schizosaccharomyces pombe (strain 972 / ATCC 24843) (Fission yeast).